We begin with the raw amino-acid sequence, 141 residues long: Large ribosomal subunit protein uL11 (141 aa).

This sequence belongs to the universal ribosomal protein uL11 family. In terms of assembly, part of the ribosomal stalk of the 50S ribosomal subunit. Interacts with L10 and the large rRNA to form the base of the stalk. L10 forms an elongated spine to which L12 dimers bind in a sequential fashion forming a multimeric L10(L12)X complex. One or more lysine residues are methylated.

Functionally, forms part of the ribosomal stalk which helps the ribosome interact with GTP-bound translation factors. In Leptospira biflexa serovar Patoc (strain Patoc 1 / Ames), this protein is Large ribosomal subunit protein uL11.